A 311-amino-acid chain; its full sequence is MVSTATKIATFAFNNCLMNAAGVYCMTKEELLAIEASEAGSFVTKTGTLAPRQGNPEPRYADTALGSINSMGLPNHGYQYYLDIVTEMQKDQASKHHFLSVVGMSAEETETILKAIQASDYQGLVELNLSCPNVPGKPQLAYDFEATDQLLKKIFSYYTKPLGIKLPPYFDIVHFDQAAAIFNQYPLAFANCVNSIGNGLVIDDEQVVIKPKNGFGGIGGDYIKPTALANVHAFYQRLNSSIQIIGTGGVKTGRDAFEHILCGAAMVQIGTALHQEGPAIFKRITKELQDIMAEKGYQTLDDFRGQLQYKP.

Substrate is bound by residues lysine 45, 69–73, and asparagine 128; that span reads NSMGL. 45-46 is a binding site for FMN; the sequence is KT. Asparagine 128 serves as a coordination point for FMN. Cysteine 131 serves as the catalytic Nucleophile. Positions 165 and 193 each coordinate FMN. 194–195 is a binding site for substrate; it reads NS. FMN-binding positions include glycine 220, 248 to 249, and 270 to 271; these read GG and GT.

This sequence belongs to the dihydroorotate dehydrogenase family. Type 1 subfamily. In terms of assembly, homodimer. It depends on FMN as a cofactor.

The protein resides in the cytoplasm. It carries out the reaction (S)-dihydroorotate + fumarate = orotate + succinate. The protein operates within pyrimidine metabolism; UMP biosynthesis via de novo pathway. Catalyzes the conversion of dihydroorotate to orotate with fumarate as the electron acceptor. In Streptococcus equi subsp. equi (strain 4047), this protein is Putative dihydroorotate dehydrogenase A (fumarate) (pyrD).